The sequence spans 421 residues: UDP-N-acetylglucosamine 1-carboxyvinyltransferase (421 aa).

A phosphoenolpyruvate-binding site is contributed by 22–23 (KN). Arg93 is a UDP-N-acetyl-alpha-D-glucosamine binding site. Cys117 serves as the catalytic Proton donor. Cys117 carries the post-translational modification 2-(S-cysteinyl)pyruvic acid O-phosphothioketal. UDP-N-acetyl-alpha-D-glucosamine is bound by residues 122 to 126 (RPVDL), Asp308, and Val330.

The protein belongs to the EPSP synthase family. MurA subfamily.

Its subcellular location is the cytoplasm. It carries out the reaction phosphoenolpyruvate + UDP-N-acetyl-alpha-D-glucosamine = UDP-N-acetyl-3-O-(1-carboxyvinyl)-alpha-D-glucosamine + phosphate. It participates in cell wall biogenesis; peptidoglycan biosynthesis. Cell wall formation. Adds enolpyruvyl to UDP-N-acetylglucosamine. The protein is UDP-N-acetylglucosamine 1-carboxyvinyltransferase of Stutzerimonas stutzeri (strain A1501) (Pseudomonas stutzeri).